Here is a 310-residue protein sequence, read N- to C-terminus: 4-diphosphocytidyl-2-C-methyl-D-erythritol kinase (310 aa).

Residue K20 is part of the active site. Position 106–116 (106–116 (PMGGGLGGGSS)) interacts with ATP. The active site involves D148.

This sequence belongs to the GHMP kinase family. IspE subfamily. Homodimer.

The enzyme catalyses 4-CDP-2-C-methyl-D-erythritol + ATP = 4-CDP-2-C-methyl-D-erythritol 2-phosphate + ADP + H(+). Its pathway is isoprenoid biosynthesis; isopentenyl diphosphate biosynthesis via DXP pathway; isopentenyl diphosphate from 1-deoxy-D-xylulose 5-phosphate: step 3/6. Catalyzes the phosphorylation of the position 2 hydroxy group of 4-diphosphocytidyl-2C-methyl-D-erythritol. In Yersinia pseudotuberculosis serotype O:3 (strain YPIII), this protein is 4-diphosphocytidyl-2-C-methyl-D-erythritol kinase.